The sequence spans 143 residues: Small ribosomal subunit protein eS19y (143 aa).

This sequence belongs to the eukaryotic ribosomal protein eS19 family.

The protein is Small ribosomal subunit protein eS19y (RPS19B) of Arabidopsis thaliana (Mouse-ear cress).